Consider the following 159-residue polypeptide: SsrA-binding protein (159 aa).

The disordered stretch occupies residues 131–159; that stretch reads KGKKLHDKRESEKERDWNRQKSRLLKDNG. Residues 137–159 are compositionally biased toward basic and acidic residues; sequence DKRESEKERDWNRQKSRLLKDNG.

This sequence belongs to the SmpB family.

The protein localises to the cytoplasm. Required for rescue of stalled ribosomes mediated by trans-translation. Binds to transfer-messenger RNA (tmRNA), required for stable association of tmRNA with ribosomes. tmRNA and SmpB together mimic tRNA shape, replacing the anticodon stem-loop with SmpB. tmRNA is encoded by the ssrA gene; the 2 termini fold to resemble tRNA(Ala) and it encodes a 'tag peptide', a short internal open reading frame. During trans-translation Ala-aminoacylated tmRNA acts like a tRNA, entering the A-site of stalled ribosomes, displacing the stalled mRNA. The ribosome then switches to translate the ORF on the tmRNA; the nascent peptide is terminated with the 'tag peptide' encoded by the tmRNA and targeted for degradation. The ribosome is freed to recommence translation, which seems to be the essential function of trans-translation. The chain is SsrA-binding protein from Rhizobium leguminosarum bv. trifolii (strain WSM2304).